The following is a 374-amino-acid chain: MAKRDYYEVLGVERGSSDAELKKAYRRLAMKHHPDRNPGDKASEDMFKEANEAYEVLSDSSKRAAYDQYGHAGVDPSMGGGGGGFGGQNFSDIFGDVFSDFFGGGRGGSRGGAQRGSDLRYTLELNLEEAVRGTTVNIRVPTLVNCKPCDGSGAKKGSSPVTCPTCGGIGQVRMQQGFFSVQQTCPRCHGQGKIISDPCDSCHGEGRVEEYKTLSVKVPAGVDTGDRIRLSGEGEAGTQGGPTGDLYVVINVREHAIFQRDGKHLFCEVPISFVDAALGGELEIPTLDGRVKLKIPEGTQTGKQFRIRGKGVAPVRGGGAGDLMCRVAVETPVNLSRRQRELLEELRGSLDDDNSHSPKTTGWFEGVKRFFGDL.

One can recognise a J domain in the interval 5-70 (DYYEVLGVER…SKRAAYDQYG (66 aa)). A CR-type zinc finger spans residues 133–211 (GTTVNIRVPT…CHGEGRVEEY (79 aa)). The Zn(2+) site is built by Cys-146, Cys-149, Cys-163, Cys-166, Cys-185, Cys-188, Cys-199, and Cys-202. CXXCXGXG motif repeat units follow at residues 146–153 (CKPCDGSG), 163–170 (CPTCGGIG), 185–192 (CPRCHGQG), and 199–206 (CDSCHGEG).

The protein belongs to the DnaJ family. Homodimer. It depends on Zn(2+) as a cofactor.

It localises to the cytoplasm. Participates actively in the response to hyperosmotic and heat shock by preventing the aggregation of stress-denatured proteins and by disaggregating proteins, also in an autonomous, DnaK-independent fashion. Unfolded proteins bind initially to DnaJ; upon interaction with the DnaJ-bound protein, DnaK hydrolyzes its bound ATP, resulting in the formation of a stable complex. GrpE releases ADP from DnaK; ATP binding to DnaK triggers the release of the substrate protein, thus completing the reaction cycle. Several rounds of ATP-dependent interactions between DnaJ, DnaK and GrpE are required for fully efficient folding. Also involved, together with DnaK and GrpE, in the DNA replication of plasmids through activation of initiation proteins. In Pseudomonas fluorescens (strain ATCC BAA-477 / NRRL B-23932 / Pf-5), this protein is Chaperone protein DnaJ.